The sequence spans 241 residues: 1-(5-phosphoribosyl)-5-[(5-phosphoribosylamino)methylideneamino] imidazole-4-carboxamide isomerase (241 aa).

Catalysis depends on Asp-10, which acts as the Proton acceptor. Asp-131 (proton donor) is an active-site residue.

This sequence belongs to the HisA/HisF family.

It localises to the cytoplasm. The catalysed reaction is 1-(5-phospho-beta-D-ribosyl)-5-[(5-phospho-beta-D-ribosylamino)methylideneamino]imidazole-4-carboxamide = 5-[(5-phospho-1-deoxy-D-ribulos-1-ylimino)methylamino]-1-(5-phospho-beta-D-ribosyl)imidazole-4-carboxamide. It functions in the pathway amino-acid biosynthesis; L-histidine biosynthesis; L-histidine from 5-phospho-alpha-D-ribose 1-diphosphate: step 4/9. The protein is 1-(5-phosphoribosyl)-5-[(5-phosphoribosylamino)methylideneamino] imidazole-4-carboxamide isomerase of Bifidobacterium longum (strain NCC 2705).